We begin with the raw amino-acid sequence, 160 residues long: Cyclic pyranopterin monophosphate synthase (160 aa).

Substrate-binding positions include 73-75 (LCH) and 110-111 (ME). Asp-125 is an active-site residue.

Belongs to the MoaC family. In terms of assembly, homohexamer; trimer of dimers.

The catalysed reaction is (8S)-3',8-cyclo-7,8-dihydroguanosine 5'-triphosphate = cyclic pyranopterin phosphate + diphosphate. It functions in the pathway cofactor biosynthesis; molybdopterin biosynthesis. In terms of biological role, catalyzes the conversion of (8S)-3',8-cyclo-7,8-dihydroguanosine 5'-triphosphate to cyclic pyranopterin monophosphate (cPMP). This is Cyclic pyranopterin monophosphate synthase from Pseudomonas paraeruginosa (strain DSM 24068 / PA7) (Pseudomonas aeruginosa (strain PA7)).